A 260-amino-acid chain; its full sequence is MIETYSQTAPRSVATGPPVSMKIFMYLLTVFLITQMIGSALFAVYLHRRLDKIEDERNLYEDFVFMKTLQKCNKGEGSLSLLNCEEIKSQFEAFLKEIMLNNEMKKEENIAMQKGDQDPRIAAHVISEASSNPASVLRWAPKGYYTISSNLVSLENGKQLAVKRQGLYYVYAQVTFCSNRAASSQAPFVASLCLHSPSGTERVLLRAASSRGSSKPCGQQSIHLGGVFELHPGASVFVNVTDPSQVSHGTGFTSFGLLKL.

At 1–22 (MIETYSQTAPRSVATGPPVSMK) the chain is on the cytoplasmic side. A helical; Signal-anchor for type II membrane protein membrane pass occupies residues 23-46 (IFMYLLTVFLITQMIGSALFAVYL). The Extracellular portion of the chain corresponds to 47-260 (HRRLDKIEDE…GFTSFGLLKL (214 aa)). Positions 121 to 260 (IAAHVISEAS…GFTSFGLLKL (140 aa)) constitute a THD domain. The cysteines at positions 177 and 217 are disulfide-linked. N-linked (GlcNAc...) asparagine glycosylation is present at asparagine 239.

It belongs to the tumor necrosis factor family. As to quaternary structure, homotrimer. Interacts with CD28. CD40 ligand, soluble form: Exists as either a monomer or a homotrimer. Forms a ternary complex between CD40 and integrins for CD40-CD40LG signaling. In terms of processing, the soluble form derives from the membrane form by proteolytic processing.

Its subcellular location is the cell membrane. The protein localises to the cell surface. It localises to the secreted. Cytokine that acts as a ligand to CD40/TNFRSF5. Costimulates T-cell proliferation and cytokine production. Its cross-linking on T-cells generates a costimulatory signal which enhances the production of IL4 and IL10 in conjunction with the TCR/CD3 ligation and CD28 costimulation. Induces the activation of NF-kappa-B. Induces the activation of kinases MAPK8 and PAK2 in T-cells. Mediates B-cell proliferation in the absence of co-stimulus as well as IgE production in the presence of IL4. Involved in immunoglobulin class switching. In terms of biological role, acts as a ligand for integrins, specifically ITGA5:ITGB1 and ITGAV:ITGB3; both integrins and the CD40 receptor are required for activation of CD40-CD40LG signaling, which have cell-type dependent effects, such as B-cell activation, NF-kappa-B signaling and anti-apoptotic signaling. The chain is CD40 ligand (CD40LG) from Canis lupus familiaris (Dog).